Here is a 279-residue protein sequence, read N- to C-terminus: 4-hydroxy-3-methylbut-2-enyl diphosphate reductase (279 aa).

C12 is a [4Fe-4S] cluster binding site. H40 and H70 together coordinate (2E)-4-hydroxy-3-methylbut-2-enyl diphosphate. Dimethylallyl diphosphate contacts are provided by H40 and H70. Residues H40 and H70 each coordinate isopentenyl diphosphate. Residue C92 coordinates [4Fe-4S] cluster. H119 is a (2E)-4-hydroxy-3-methylbut-2-enyl diphosphate binding site. H119 serves as a coordination point for dimethylallyl diphosphate. H119 provides a ligand contact to isopentenyl diphosphate. The active-site Proton donor is the E121. T151 contributes to the (2E)-4-hydroxy-3-methylbut-2-enyl diphosphate binding site. C181 is a binding site for [4Fe-4S] cluster. 4 residues coordinate (2E)-4-hydroxy-3-methylbut-2-enyl diphosphate: S209, S210, N211, and S251. Dimethylallyl diphosphate contacts are provided by S209, S210, N211, and S251. 4 residues coordinate isopentenyl diphosphate: S209, S210, N211, and S251.

The protein belongs to the IspH family. The cofactor is [4Fe-4S] cluster.

It carries out the reaction isopentenyl diphosphate + 2 oxidized [2Fe-2S]-[ferredoxin] + H2O = (2E)-4-hydroxy-3-methylbut-2-enyl diphosphate + 2 reduced [2Fe-2S]-[ferredoxin] + 2 H(+). The catalysed reaction is dimethylallyl diphosphate + 2 oxidized [2Fe-2S]-[ferredoxin] + H2O = (2E)-4-hydroxy-3-methylbut-2-enyl diphosphate + 2 reduced [2Fe-2S]-[ferredoxin] + 2 H(+). Its pathway is isoprenoid biosynthesis; dimethylallyl diphosphate biosynthesis; dimethylallyl diphosphate from (2E)-4-hydroxy-3-methylbutenyl diphosphate: step 1/1. It functions in the pathway isoprenoid biosynthesis; isopentenyl diphosphate biosynthesis via DXP pathway; isopentenyl diphosphate from 1-deoxy-D-xylulose 5-phosphate: step 6/6. Catalyzes the conversion of 1-hydroxy-2-methyl-2-(E)-butenyl 4-diphosphate (HMBPP) into a mixture of isopentenyl diphosphate (IPP) and dimethylallyl diphosphate (DMAPP). Acts in the terminal step of the DOXP/MEP pathway for isoprenoid precursor biosynthesis. The chain is 4-hydroxy-3-methylbut-2-enyl diphosphate reductase from Thermotoga neapolitana (strain ATCC 49049 / DSM 4359 / NBRC 107923 / NS-E).